Consider the following 177-residue polypeptide: Probable chemoreceptor glutamine deamidase CheD (177 aa).

The protein belongs to the CheD family.

The enzyme catalyses L-glutaminyl-[protein] + H2O = L-glutamyl-[protein] + NH4(+). In terms of biological role, probably deamidates glutamine residues to glutamate on methyl-accepting chemotaxis receptors (MCPs), playing an important role in chemotaxis. The chain is Probable chemoreceptor glutamine deamidase CheD from Pseudomonas syringae pv. syringae (strain B728a).